A 704-amino-acid polypeptide reads, in one-letter code: Polyribonucleotide nucleotidyltransferase (704 aa).

Positions 486 and 492 each coordinate Mg(2+). Residues 553-612 (PKIVIVKINPDKIRDVIGPGGKQINKIIEETGVKIDTEQDGTIYISSANEEMNARAKQII) enclose the KH domain. Residues 622–690 (GEYYLSTVKR…KQGRVNLSRK (69 aa)) form the S1 motif domain.

Belongs to the polyribonucleotide nucleotidyltransferase family. Mg(2+) is required as a cofactor.

The protein localises to the cytoplasm. The catalysed reaction is RNA(n+1) + phosphate = RNA(n) + a ribonucleoside 5'-diphosphate. Functionally, involved in mRNA degradation. Catalyzes the phosphorolysis of single-stranded polyribonucleotides processively in the 3'- to 5'-direction. The sequence is that of Polyribonucleotide nucleotidyltransferase from Lysinibacillus sphaericus (strain C3-41).